Consider the following 284-residue polypeptide: Agamous-like MADS-box protein AGL49 (284 aa).

A disordered region spans residues 1-20 (MAPRQKKPNKSDDDDGDLHR). Residues 21–66 (KKQSFFKQRFPGFKKKASELSVLCGNSVGFICYGPDNDLHVWPQSQ) enclose the MADS-box domain.

In terms of assembly, interacts with MEE14/CBP1.

It is found in the nucleus. Functionally, probable transcription factor that may function in the maintenance of the proper function of the central cell in pollen tube attraction. This is Agamous-like MADS-box protein AGL49 from Arabidopsis thaliana (Mouse-ear cress).